Reading from the N-terminus, the 637-residue chain is Biosynthetic arginine decarboxylase (637 aa).

Lys-101 carries the N6-(pyridoxal phosphate)lysine modification. 286-296 lines the substrate pocket; it reads FDVGGGLAVDY.

This sequence belongs to the Orn/Lys/Arg decarboxylase class-II family. SpeA subfamily. Mg(2+) serves as cofactor. It depends on pyridoxal 5'-phosphate as a cofactor.

It carries out the reaction L-arginine + H(+) = agmatine + CO2. It functions in the pathway amine and polyamine biosynthesis; agmatine biosynthesis; agmatine from L-arginine: step 1/1. Functionally, catalyzes the biosynthesis of agmatine from arginine. The polypeptide is Biosynthetic arginine decarboxylase (Shewanella putrefaciens (strain CN-32 / ATCC BAA-453)).